The sequence spans 336 residues: Methionyl-tRNA formyltransferase (336 aa).

110–113 (SLLP) contacts (6S)-5,6,7,8-tetrahydrofolate.

It belongs to the Fmt family.

It carries out the reaction L-methionyl-tRNA(fMet) + (6R)-10-formyltetrahydrofolate = N-formyl-L-methionyl-tRNA(fMet) + (6S)-5,6,7,8-tetrahydrofolate + H(+). Its function is as follows. Attaches a formyl group to the free amino group of methionyl-tRNA(fMet). The formyl group appears to play a dual role in the initiator identity of N-formylmethionyl-tRNA by promoting its recognition by IF2 and preventing the misappropriation of this tRNA by the elongation apparatus. This chain is Methionyl-tRNA formyltransferase, found in Prochlorococcus marinus (strain NATL2A).